Consider the following 97-residue polypeptide: MKNLRHYDVIVSPIITEKSTMISEYNQVAFNVAPKATKPEIKAAVEALFSVKVKAVNTIVRKGKVKRFKGIVGRQNDVKKAIVTLASGQSIDVSTGL.

The protein belongs to the universal ribosomal protein uL23 family. In terms of assembly, part of the 50S ribosomal subunit. Contacts protein L29, and trigger factor when it is bound to the ribosome.

In terms of biological role, one of the early assembly proteins it binds 23S rRNA. One of the proteins that surrounds the polypeptide exit tunnel on the outside of the ribosome. Forms the main docking site for trigger factor binding to the ribosome. This Bartonella henselae (strain ATCC 49882 / DSM 28221 / CCUG 30454 / Houston 1) (Rochalimaea henselae) protein is Large ribosomal subunit protein uL23.